We begin with the raw amino-acid sequence, 123 residues long: UPF0102 protein Pcar_2217 (123 aa).

Belongs to the UPF0102 family.

In Syntrophotalea carbinolica (strain DSM 2380 / NBRC 103641 / GraBd1) (Pelobacter carbinolicus), this protein is UPF0102 protein Pcar_2217.